A 174-amino-acid chain; its full sequence is Crossover junction endodeoxyribonuclease RuvC (174 aa).

Catalysis depends on residues D8, E67, and D139. The Mg(2+) site is built by D8, E67, and D139.

This sequence belongs to the RuvC family. In terms of assembly, homodimer which binds Holliday junction (HJ) DNA. The HJ becomes 2-fold symmetrical on binding to RuvC with unstacked arms; it has a different conformation from HJ DNA in complex with RuvA. In the full resolvosome a probable DNA-RuvA(4)-RuvB(12)-RuvC(2) complex forms which resolves the HJ. It depends on Mg(2+) as a cofactor.

It localises to the cytoplasm. The catalysed reaction is Endonucleolytic cleavage at a junction such as a reciprocal single-stranded crossover between two homologous DNA duplexes (Holliday junction).. The RuvA-RuvB-RuvC complex processes Holliday junction (HJ) DNA during genetic recombination and DNA repair. Endonuclease that resolves HJ intermediates. Cleaves cruciform DNA by making single-stranded nicks across the HJ at symmetrical positions within the homologous arms, yielding a 5'-phosphate and a 3'-hydroxyl group; requires a central core of homology in the junction. The consensus cleavage sequence is 5'-(A/T)TT(C/G)-3'. Cleavage occurs on the 3'-side of the TT dinucleotide at the point of strand exchange. HJ branch migration catalyzed by RuvA-RuvB allows RuvC to scan DNA until it finds its consensus sequence, where it cleaves and resolves the cruciform DNA. This Pseudoalteromonas translucida (strain TAC 125) protein is Crossover junction endodeoxyribonuclease RuvC.